The primary structure comprises 835 residues: Phenylalanine--tRNA ligase beta subunit (835 aa).

The tRNA-binding domain occupies 44-158; the sequence is GPVDGPLTVG…LPGADGADVL (115 aa). The B5 domain maps to 414–493; that stretch reads WSLPPIRIAV…RLEGLEVIRS (80 aa). Mg(2+) is bound by residues D471, D477, E480, and E481. The FDX-ACB domain maps to 741-834; sequence SPFPAVLQDV…AAERVGATLR (94 aa).

This sequence belongs to the phenylalanyl-tRNA synthetase beta subunit family. Type 1 subfamily. As to quaternary structure, tetramer of two alpha and two beta subunits. The cofactor is Mg(2+).

It localises to the cytoplasm. The catalysed reaction is tRNA(Phe) + L-phenylalanine + ATP = L-phenylalanyl-tRNA(Phe) + AMP + diphosphate + H(+). The protein is Phenylalanine--tRNA ligase beta subunit of Mycobacterium leprae (strain TN).